Reading from the N-terminus, the 236-residue chain is Ubiquinone biosynthesis O-methyltransferase (236 aa).

S-adenosyl-L-methionine is bound by residues R39, G59, D80, and M124.

The protein belongs to the methyltransferase superfamily. UbiG/COQ3 family.

It carries out the reaction a 3-demethylubiquinol + S-adenosyl-L-methionine = a ubiquinol + S-adenosyl-L-homocysteine + H(+). It catalyses the reaction a 3-(all-trans-polyprenyl)benzene-1,2-diol + S-adenosyl-L-methionine = a 2-methoxy-6-(all-trans-polyprenyl)phenol + S-adenosyl-L-homocysteine + H(+). It functions in the pathway cofactor biosynthesis; ubiquinone biosynthesis. O-methyltransferase that catalyzes the 2 O-methylation steps in the ubiquinone biosynthetic pathway. This is Ubiquinone biosynthesis O-methyltransferase from Shewanella pealeana (strain ATCC 700345 / ANG-SQ1).